The following is a 404-amino-acid chain: G1/S-specific cyclin-E2 (404 aa).

The tract at residues 1 to 45 (MSRRSSRLQAKQQPQASQTDSPQEAQIIQAKKRKTAQDVKKRKEE) is disordered. Polar residues predominate over residues 7–26 (RLQAKQQPQASQTDSPQEAQ). At Ser-21 the chain carries Phosphoserine. The span at 35–45 (TAQDVKKRKEE) shows a compositional bias: basic and acidic residues. N6-lactoyllysine is present on Lys-348. Ser-383 carries the post-translational modification Phosphoserine. Thr-392 carries the post-translational modification Phosphothreonine.

The protein belongs to the cyclin family. Cyclin E subfamily. Interacts with the CDK2 (in vivo) and CDK3 (in vitro) protein kinases to form a serine/threonine kinase holoenzyme complex. The cyclin subunit imparts substrate specificity to the complex. In terms of processing, phosphorylation by CDK2 triggers its release from CDK2 and degradation via the ubiquitin proteasome pathway. Lactylated at Lys-348. Delactylated by SIRT3.

It is found in the nucleus. Its function is as follows. Essential for the control of the cell cycle at the late G1 and early S phase. In Bos taurus (Bovine), this protein is G1/S-specific cyclin-E2 (CCNE2).